A 448-amino-acid polypeptide reads, in one-letter code: Argininosuccinate synthase (448 aa).

ATP is bound by residues 17-25 (AFSGGLDTS) and A43. Residue Y99 participates in L-citrulline binding. Positions 129 and 131 each coordinate ATP. Residues T131, N135, and D136 each coordinate L-aspartate. N135 lines the L-citrulline pocket. D136 serves as a coordination point for ATP. 2 residues coordinate L-citrulline: R139 and S192. Residue D194 coordinates ATP. Residues T201, E203, and E280 each contribute to the L-citrulline site.

The protein belongs to the argininosuccinate synthase family. Type 2 subfamily. As to quaternary structure, homotetramer.

Its subcellular location is the cytoplasm. The enzyme catalyses L-citrulline + L-aspartate + ATP = 2-(N(omega)-L-arginino)succinate + AMP + diphosphate + H(+). The protein operates within amino-acid biosynthesis; L-arginine biosynthesis; L-arginine from L-ornithine and carbamoyl phosphate: step 2/3. The polypeptide is Argininosuccinate synthase (Bradyrhizobium sp. (strain ORS 278)).